The chain runs to 146 residues: Large ribosomal subunit protein uL22 (146 aa).

It belongs to the universal ribosomal protein uL22 family. As to quaternary structure, part of the 50S ribosomal subunit.

In terms of biological role, this protein binds specifically to 23S rRNA; its binding is stimulated by other ribosomal proteins, e.g. L4, L17, and L20. It is important during the early stages of 50S assembly. It makes multiple contacts with different domains of the 23S rRNA in the assembled 50S subunit and ribosome. Its function is as follows. The globular domain of the protein is located near the polypeptide exit tunnel on the outside of the subunit, while an extended beta-hairpin is found that lines the wall of the exit tunnel in the center of the 70S ribosome. The protein is Large ribosomal subunit protein uL22 of Nocardioides sp. (strain ATCC BAA-499 / JS614).